Here is a 373-residue protein sequence, read N- to C-terminus: Mitochondrial fission regulator 2 (373 aa).

Serine 136 bears the Phosphoserine mark. Positions 151-179 form a coiled coil; the sequence is VSEAAIKKIAALEDELTSLRAQIAAIVAM. Disordered stretches follow at residues 189-331 and 346-373; these read GFIS…WDPV and DDSFDSENRSWQGSPFSSPETSRNGSRF. Positions 224–239 are enriched in pro residues; the sequence is SPPPLPPPPPPLPPPQ. Basic and acidic residues-rich tracts occupy residues 275-287 and 297-310; these read KKTDGSHHSESQR and VLKDMNKVKLRPVE. 2 positions are modified to phosphoserine: serine 312 and serine 348. The span at 354–373 shows a compositional bias: polar residues; sequence RSWQGSPFSSPETSRNGSRF.

It belongs to the MTFR1 family.

It localises to the mitochondrion. May play a role in mitochondrial aerobic respiration essentially in the testis. Can also promote mitochondrial fission. The chain is Mitochondrial fission regulator 2 (Mtfr2) from Rattus norvegicus (Rat).